Here is a 216-residue protein sequence, read N- to C-terminus: Deoxyribose-phosphate aldolase (216 aa).

D89 functions as the Proton donor/acceptor in the catalytic mechanism. The Schiff-base intermediate with acetaldehyde role is filled by K153. K182 (proton donor/acceptor) is an active-site residue.

This sequence belongs to the DeoC/FbaB aldolase family. DeoC type 1 subfamily.

It localises to the cytoplasm. It catalyses the reaction 2-deoxy-D-ribose 5-phosphate = D-glyceraldehyde 3-phosphate + acetaldehyde. Its pathway is carbohydrate degradation; 2-deoxy-D-ribose 1-phosphate degradation; D-glyceraldehyde 3-phosphate and acetaldehyde from 2-deoxy-alpha-D-ribose 1-phosphate: step 2/2. Functionally, catalyzes a reversible aldol reaction between acetaldehyde and D-glyceraldehyde 3-phosphate to generate 2-deoxy-D-ribose 5-phosphate. The sequence is that of Deoxyribose-phosphate aldolase from Treponema denticola (strain ATCC 35405 / DSM 14222 / CIP 103919 / JCM 8153 / KCTC 15104).